Here is a 444-residue protein sequence, read N- to C-terminus: Divalent metal cation transporter MntH (444 aa).

A run of 11 helical transmembrane segments spans residues 39-59 (LLFA…GNFA), 69-89 (GYTL…FQAL), 109-128 (FSRP…AMAT), 146-166 (LPLI…LLFE), 175-195 (LVIG…MFIA), 215-235 (TALT…AVYL), 264-284 (VILA…MAAS), 304-324 (TPLL…TSGI), 346-366 (IPVW…ILAG), 372-392 (ALVI…IALI), and 417-437 (AAAI…GFTI).

The protein belongs to the NRAMP family.

It is found in the cell inner membrane. Functionally, h(+)-stimulated, divalent metal cation uptake system. In Granulibacter bethesdensis (strain ATCC BAA-1260 / CGDNIH1), this protein is Divalent metal cation transporter MntH.